A 190-amino-acid polypeptide reads, in one-letter code: Embryo-specific protein ATS3B (190 aa).

Positions 1–24 (MASVRLFFTLISFVFIISTSVYES) are cleaved as a signal peptide. N-linked (GlcNAc...) asparagine glycosylation is present at Asn-37. In terms of domain architecture, PLAT spans 48 to 158 (CAYTVIISTS…ESVWYGFNYC (111 aa)).

In terms of assembly, interacts with EULS3 (via N-terminus). As to expression, expressed in roots, rosette leaves, stems, cauline leaves and flowers.

Its subcellular location is the secreted. Functionally, may play a role during embryo development. This chain is Embryo-specific protein ATS3B, found in Arabidopsis thaliana (Mouse-ear cress).